A 194-amino-acid polypeptide reads, in one-letter code: NADH-quinone oxidoreductase subunit B (194 aa).

The span at 1 to 11 shows a compositional bias: polar residues; sequence MGMSQNNSTLV. The tract at residues 1-22 is disordered; the sequence is MGMSQNNSTLVAPQPKGIIDPA. [4Fe-4S] cluster contacts are provided by cysteine 72, cysteine 73, cysteine 138, and cysteine 168.

It belongs to the complex I 20 kDa subunit family. NDH-1 is composed of 14 different subunits. Subunits NuoB, C, D, E, F, and G constitute the peripheral sector of the complex. It depends on [4Fe-4S] cluster as a cofactor.

The protein resides in the cell inner membrane. It catalyses the reaction a quinone + NADH + 5 H(+)(in) = a quinol + NAD(+) + 4 H(+)(out). Functionally, NDH-1 shuttles electrons from NADH, via FMN and iron-sulfur (Fe-S) centers, to quinones in the respiratory chain. The immediate electron acceptor for the enzyme in this species is believed to be ubiquinone. Couples the redox reaction to proton translocation (for every two electrons transferred, four hydrogen ions are translocated across the cytoplasmic membrane), and thus conserves the redox energy in a proton gradient. The chain is NADH-quinone oxidoreductase subunit B from Agrobacterium fabrum (strain C58 / ATCC 33970) (Agrobacterium tumefaciens (strain C58)).